A 426-amino-acid polypeptide reads, in one-letter code: GATA type zinc finger protein asd-4 (426 aa).

The GATA-type zinc-finger motif lies at 16–40 (CQNCATSTTPLWRRDEMGQVLCNAC). Disordered stretches follow at residues 70–143 (RPDL…NPHI) and 159–178 (PGFGVPTASPGRAPSPMNGE). Residues 104–113 (PNNPAAAARR) show a composition bias toward low complexity. Residues 128-138 (SPVSRTGTPNV) show a composition bias toward polar residues. Residues 182–292 (QTHEQLLAAN…QDNGRHKKIR (111 aa)) adopt a coiled-coil conformation. Positions 306 to 318 (VEPQQPEQQQPAP) are enriched in low complexity. A disordered region spans residues 306–426 (VEPQQPEQQQ…PVEEAPKAES (121 aa)). Residues 335-353 (APAPAPEAAPEQAPAPAPE) are compositionally biased toward pro residues. Low complexity predominate over residues 354–419 (PVQEQAQEPE…SEPPTTAPVE (66 aa)).

As to quaternary structure, homotetramer.

The protein localises to the nucleus. Transcriptional regulator that functions in sexual development; disruption of asd-4 gene results in agenesis of ascus and ascospore with macroscopically normal fruiting body formation. The GATA-type zinc finger domain binds to DNA sequences from its own promoter region. The polypeptide is GATA type zinc finger protein asd-4 (asd-4) (Neurospora crassa (strain ATCC 24698 / 74-OR23-1A / CBS 708.71 / DSM 1257 / FGSC 987)).